The sequence spans 191 residues: uncharacterized protein (191 aa).

4 helical membrane passes run 12-32, 48-68, 92-112, and 168-188; these read FAFL…FFTL, LVAL…LTLF, YISV…LLSL, and IFCL…SCAF.

It localises to the membrane. This is an uncharacterized protein from Saccharomyces cerevisiae (strain ATCC 204508 / S288c) (Baker's yeast).